Consider the following 204-residue polypeptide: Holliday junction branch migration complex subunit RuvA (204 aa).

The segment at 1–67 (MIGYLEGKIL…QPKPVLIGFN (67 aa)) is domain I. The domain II stretch occupies residues 68–145 (SLEEREFFER…VFAGEHGGEP (78 aa)). The segment at 146-156 (AGPAPVEENFH) is flexible linker. The segment at 156 to 204 (HLLVLDVLVNQLGHKAAEAKELINQAIKRNPAISSPEELFDEVYRGETG) is domain III.

This sequence belongs to the RuvA family. As to quaternary structure, homotetramer. Forms an RuvA(8)-RuvB(12)-Holliday junction (HJ) complex. HJ DNA is sandwiched between 2 RuvA tetramers; dsDNA enters through RuvA and exits via RuvB. An RuvB hexamer assembles on each DNA strand where it exits the tetramer. Each RuvB hexamer is contacted by two RuvA subunits (via domain III) on 2 adjacent RuvB subunits; this complex drives branch migration. In the full resolvosome a probable DNA-RuvA(4)-RuvB(12)-RuvC(2) complex forms which resolves the HJ.

Its subcellular location is the cytoplasm. Functionally, the RuvA-RuvB-RuvC complex processes Holliday junction (HJ) DNA during genetic recombination and DNA repair, while the RuvA-RuvB complex plays an important role in the rescue of blocked DNA replication forks via replication fork reversal (RFR). RuvA specifically binds to HJ cruciform DNA, conferring on it an open structure. The RuvB hexamer acts as an ATP-dependent pump, pulling dsDNA into and through the RuvAB complex. HJ branch migration allows RuvC to scan DNA until it finds its consensus sequence, where it cleaves and resolves the cruciform DNA. The chain is Holliday junction branch migration complex subunit RuvA from Desulfatibacillum aliphaticivorans.